Here is a 173-residue protein sequence, read N- to C-terminus: Nuclear transcription factor Y subunit B-8 (173 aa).

Residues 1-30 form a disordered region; the sequence is MAESQAKSPGGCGSHESGGDQSPRSLHVRE. A2 carries the N-acetylalanine modification. Residues 35 to 41 mediate DNA binding; sequence LPIANIS. The segment at 62-73 is subunit association domain (SAD); sequence VQECVSEFISFV. The tract at residues 123 to 173 is disordered; that stretch reads DTKGSAKGGDPNAKKDGQSSQNGQFSQLAHQGPYGNSQAQQHMMVPMPGTD. A compositionally biased stretch (polar residues) spans 140 to 163; the sequence is QSSQNGQFSQLAHQGPYGNSQAQQ.

The protein belongs to the NFYB/HAP3 subunit family. Heterotrimeric transcription factor composed of three components, NF-YA, NF-YB and NF-YC. NF-YB and NF-YC must interact and dimerize for NF-YA association and DNA binding. As to expression, expressed in flowers and mature rosettes.

It is found in the nucleus. Its function is as follows. Component of the NF-Y/HAP transcription factor complex. The NF-Y complex stimulates the transcription of various genes by recognizing and binding to a CCAAT motif in promoters. This Arabidopsis thaliana (Mouse-ear cress) protein is Nuclear transcription factor Y subunit B-8 (NFYB8).